A 396-amino-acid chain; its full sequence is Serine/threonine-protein kinase VRK1 (396 aa).

The Protein kinase domain maps to 37-317 (WKVGLPIGQG…LLDYTEKPLY (281 aa)). Residues 43-51 (IGQGGFGCI) and K71 each bind ATP. Residue K71 forms a Glycyl lysine isopeptide (Lys-Gly) (interchain with G-Cter in SUMO2) linkage. The active-site Proton acceptor is D177. S342 is modified (phosphoserine; by PLK3). A disordered region spans residues 354-396 (ITKKRKKEIEESKEPGVEDTEWSNTQTEEAIQTRSRTRKRVQK). At T355 the chain carries Phosphothreonine; by autocatalysis. Over residues 360–369 (KEIEESKEPG) the composition is skewed to basic and acidic residues. Residues 375–387 (WSNTQTEEAIQTR) show a composition bias toward polar residues. Position 376 is a phosphoserine (S376). The residue at position 378 (T378) is a Phosphothreonine. The segment at 387-393 (RSRTRKR) is required for interaction with the nucleosome.

The protein belongs to the protein kinase superfamily. CK1 Ser/Thr protein kinase family. VRK subfamily. As to quaternary structure, interacts with HDAC1, KAT2B, SETDB1, KDM3A and KDM4A. Associates with the nucleosome through interactions with nucleosome DNA, histone H2A and histone H2B; the interaction with H2A and H2B is mediated by the nucleosome acidic patch, a cluster of negatively charged residues of H2A and H2B forming a cleft within the nucleosome core. In terms of assembly, (Microbial infection) Interacts with vaccinia protein B12; this interaction inhibits the repressive activity of the vaccinia virus B12 pseudokinase on viral replication factory formation. Autophosphorylated at various serine and threonine residues. Autophosphorylation does not impair its ability to phosphorylate p53/TP53. Phosphorylation by PLK3 leads to induction of Golgi fragmentation during mitosis. Widely expressed. Highly expressed in fetal liver, testis and thymus.

It localises to the nucleus. Its subcellular location is the cytoplasm. The protein resides in the cajal body. It carries out the reaction L-seryl-[protein] + ATP = O-phospho-L-seryl-[protein] + ADP + H(+). The catalysed reaction is L-threonyl-[protein] + ATP = O-phospho-L-threonyl-[protein] + ADP + H(+). Its activity is regulated as follows. Active in presence of Mn(2+), Mg(2+) and Zn(2+), but is not functional with Ca(2+) or Cu(2+). Has a higher affinity for Mn(2+) than for Mg(2+). RAN inhibits its autophosphorylation and its ability to phosphorylate histone H3. Functionally, serine/threonine kinase involved in the regulation of key cellular processes including the cell cycle, nuclear condensation, transcription regulation, and DNA damage response. Controls chromatin organization and remodeling by mediating phosphorylation of histone H3 on 'Thr-4' and histone H2AX (H2aXT4ph). It also phosphorylates KAT5 in response to DNA damage, promoting KAT5 association with chromatin and histone acetyltransferase activity. Is involved in the regulation of cell cycle progression of neural progenitors, and is required for proper cortical neuronal migration. Is involved in neurite elongation and branching in motor neurons, and has an essential role in Cajal bodies assembly, acting through COIL phosphorylation and the control of coilin degradation. Involved in Golgi disassembly during the cell cycle: following phosphorylation by PLK3 during mitosis, it is required to induce Golgi fragmentation. Phosphorylates BANF1: disrupts its ability to bind DNA, reduces its binding to LEM domain-containing proteins and causes its relocalization from the nucleus to the cytoplasm. Phosphorylates TP53BP1 and p53/TP53 on 'Thr-18', preventing the interaction between p53/TP53 and MDM2. Phosphorylates ATF2 which activates its transcriptional activity. Phosphorylates JUN. In Homo sapiens (Human), this protein is Serine/threonine-protein kinase VRK1.